The chain runs to 137 residues: Large ribosomal subunit protein uL16 (137 aa).

Positions 1–20 (MLQPSNRKYRKDFKGRNRGV) are disordered. Basic residues predominate over residues 7-17 (RKYRKDFKGRN).

This sequence belongs to the universal ribosomal protein uL16 family. In terms of assembly, part of the 50S ribosomal subunit.

Functionally, binds 23S rRNA and is also seen to make contacts with the A and possibly P site tRNAs. This Coxiella burnetii (strain CbuK_Q154) (Coxiella burnetii (strain Q154)) protein is Large ribosomal subunit protein uL16.